Here is a 151-residue protein sequence, read N- to C-terminus: Probable cGMP 3',5'-cyclic phosphodiesterase subunit delta (151 aa).

This sequence belongs to the PDE6D/unc-119 family. In terms of assembly, interacts with Pde6.

The protein resides in the nucleus. It is found in the cytoplasm. This Drosophila mojavensis (Fruit fly) protein is Probable cGMP 3',5'-cyclic phosphodiesterase subunit delta.